A 75-amino-acid chain; its full sequence is Antimicrobial peptide ctriporin (75 aa).

Positions 1-22 (MDSKYLFVFLIFNVIVIDLCQG) are cleaved as a signal peptide. The residue at position 41 (lysine 41) is a Lysine amide. Positions 47 to 75 (ELGSQYDYLQDFRKRELDLDDLLSKFPDY) are excised as a propeptide.

The protein belongs to the non-disulfide-bridged peptide (NDBP) superfamily. Short antimicrobial peptide (group 4) family. Expressed by the venom gland.

The protein resides in the secreted. It localises to the target cell membrane. Its function is as follows. Antimicrobial peptide that acts by breaking the cell wall. Is active against Gram-positive bacteria, fungi and antibiotic-resistant pathogens: S.aureus (MIC=5 ug/ml), M.luteus (MIC=5 ug/ml), B.thuringiensis (MIC=10 ug/ml), B.subtilis (MIC=10 ug/ml), C.albicans (MIC=20 ug/ml), methicillin-resistant S.aureus (MIC=5-10 ug/ml), and penicillin-resistant S.epidermidis (MIC=10 ug/ml). Also shows potent activity against antibiotic-sensitive and -resistant Acinetobacter baumannii (MIC=10-20 uM). Shows cytolytic activity against human erythrocytes. In vivo, is efficient in curing staphylococcal skin infection in mice, when externally applied. This Chaerilus tricostatus (Scorpion) protein is Antimicrobial peptide ctriporin.